The chain runs to 470 residues: Na(+)-translocating NADH-quinone reductase subunit A (470 aa).

It belongs to the NqrA family. In terms of assembly, composed of six subunits; NqrA, NqrB, NqrC, NqrD, NqrE and NqrF.

It carries out the reaction a ubiquinone + n Na(+)(in) + NADH + H(+) = a ubiquinol + n Na(+)(out) + NAD(+). Its function is as follows. NQR complex catalyzes the reduction of ubiquinone-1 to ubiquinol by two successive reactions, coupled with the transport of Na(+) ions from the cytoplasm to the periplasm. NqrA to NqrE are probably involved in the second step, the conversion of ubisemiquinone to ubiquinol. This Chlamydia caviae (strain ATCC VR-813 / DSM 19441 / 03DC25 / GPIC) (Chlamydophila caviae) protein is Na(+)-translocating NADH-quinone reductase subunit A.